We begin with the raw amino-acid sequence, 382 residues long: SPRY domain-containing protein C285.10c (382 aa).

A helical membrane pass occupies residues 21–41 (LAILFIFIALAAVIVLLICLL). In terms of domain architecture, B30.2/SPRY spans 79–284 (GFSLLDDMGK…LHVNLGQAGY (206 aa)). The segment at 304-382 (APPPSYSTSQ…MHSMPATDEV (79 aa)) is disordered. Polar residues-rich tracts occupy residues 309–334 (YSTSQPTISWDAASESSAGTTTQGDT) and 361–372 (FSPSSSNNQAYQ).

Its subcellular location is the cytoplasm. It is found in the membrane. The chain is SPRY domain-containing protein C285.10c from Schizosaccharomyces pombe (strain 972 / ATCC 24843) (Fission yeast).